The sequence spans 266 residues: Regulatory protein RecX (266 aa).

It belongs to the RecX family.

The protein localises to the cytoplasm. In terms of biological role, modulates RecA activity. The protein is Regulatory protein RecX of Leuconostoc citreum (strain KM20).